The primary structure comprises 323 residues: Peroxisomal and mitochondrial division factor 2 (323 aa).

Disordered stretches follow at residues 1–55, 73–92, and 120–143; these read MAEE…NDAI, ESKA…KSDE, and TART…SQKG. Residues 1–297 lie on the Cytoplasmic side of the membrane; it reads MAEERSLNGE…WSPNVTAVGS (297 aa). Residues 13-26 are compositionally biased toward acidic residues; that stretch reads GQDDESFFDSDQQG. Residues 28–278 are a coiled coil; that stretch reads DGKSTELNQK…INGLKNVVEE (251 aa). A helical membrane pass occupies residues 298 to 318; that stretch reads GGAVAAVAVAVAGAAVVCYIY. Topologically, residues 319 to 323 are mitochondrial intermembrane; sequence HSRRV.

As to quaternary structure, homodimer. Interacts with PMD1.

It localises to the mitochondrion outer membrane. In terms of biological role, involved in morphogenesis and proliferation of mitochondria. Does not act redundantly with PMD1. Is not involved in peroxisomal proliferation. The polypeptide is Peroxisomal and mitochondrial division factor 2 (Arabidopsis thaliana (Mouse-ear cress)).